Consider the following 357-residue polypeptide: uncharacterized protein (357 aa).

3 helical membrane-spanning segments follow: residues 21–41 (FIKI…LFSW), 86–106 (FFCL…CTLF), and 135–155 (GGFV…PVIF). Disordered stretches follow at residues 184-229 (DKNK…AMSD) and 283-357 (KAGS…NKRN). The segment covering 195–223 (TTNTTNFSGNGSSSSTTNATSSSSSQANN) has biased composition (low complexity). Composition is skewed to basic and acidic residues over residues 305–314 (KIEEYDNQKQ) and 322–337 (KETN…EKET). Positions 305 to 337 (KIEEYDNQKQEEEENEEKETNKQQTQKDDEKET) form a coiled coil. Basic residues predominate over residues 346-357 (KKSKKGKKNKRN).

The protein localises to the membrane. This is an uncharacterized protein from Dictyostelium discoideum (Social amoeba).